The following is a 371-amino-acid chain: Putative F-box protein At1g58090 (371 aa).

Residues 1 to 46 (MVSKKLPLDLEEEILFRVPPRSLVRFRSVCREWNTLFKNKRFINKN) form the F-box domain.

The polypeptide is Putative F-box protein At1g58090 (Arabidopsis thaliana (Mouse-ear cress)).